The following is a 433-amino-acid chain: 3-phosphoshikimate 1-carboxyvinyltransferase (433 aa).

3-phosphoshikimate-binding residues include K22, S23, and R27. Residue K22 coordinates phosphoenolpyruvate. 2 residues coordinate phosphoenolpyruvate: G96 and R129. 3-phosphoshikimate is bound by residues S175, S176, Q177, S203, D318, N341, and K345. Position 177 (Q177) interacts with phosphoenolpyruvate. D318 acts as the Proton acceptor in catalysis. R349, R393, and K418 together coordinate phosphoenolpyruvate.

This sequence belongs to the EPSP synthase family. Monomer.

The protein resides in the cytoplasm. It carries out the reaction 3-phosphoshikimate + phosphoenolpyruvate = 5-O-(1-carboxyvinyl)-3-phosphoshikimate + phosphate. The protein operates within metabolic intermediate biosynthesis; chorismate biosynthesis; chorismate from D-erythrose 4-phosphate and phosphoenolpyruvate: step 6/7. In terms of biological role, catalyzes the transfer of the enolpyruvyl moiety of phosphoenolpyruvate (PEP) to the 5-hydroxyl of shikimate-3-phosphate (S3P) to produce enolpyruvyl shikimate-3-phosphate and inorganic phosphate. The polypeptide is 3-phosphoshikimate 1-carboxyvinyltransferase (Mannheimia succiniciproducens (strain KCTC 0769BP / MBEL55E)).